A 545-amino-acid polypeptide reads, in one-letter code: Probable acyl-activating enzyme 4 (545 aa).

Belongs to the ATP-dependent AMP-binding enzyme family. As to expression, expressed in roots, leaves, stems, flowers and developing seeds.

Its function is as follows. May act as an acid--thiol ligase that activates carboxylic acids by forming acyl-CoAs. The polypeptide is Probable acyl-activating enzyme 4 (AEE4) (Arabidopsis thaliana (Mouse-ear cress)).